Here is an 841-residue protein sequence, read N- to C-terminus: Protein translocase subunit SecA (841 aa).

Residues glutamine 85, 103-107, and aspartate 492 contribute to the ATP site; that span reads GEGKT. Residues 790 to 814 form a disordered region; it reads IQGQTTAHQPKEGDEEKQAKKKPVR. Residues 798 to 807 are compositionally biased toward basic and acidic residues; sequence QPKEGDEEKQ. Positions 825, 827, 836, and 837 each coordinate Zn(2+).

This sequence belongs to the SecA family. Monomer and homodimer. Part of the essential Sec protein translocation apparatus which comprises SecA, SecYEG and auxiliary proteins SecDF. Other proteins may also be involved. It depends on Zn(2+) as a cofactor.

It localises to the cell membrane. Its subcellular location is the cytoplasm. The catalysed reaction is ATP + H2O + cellular proteinSide 1 = ADP + phosphate + cellular proteinSide 2.. Part of the Sec protein translocase complex. Interacts with the SecYEG preprotein conducting channel. Has a central role in coupling the hydrolysis of ATP to the transfer of proteins into and across the cell membrane, serving as an ATP-driven molecular motor driving the stepwise translocation of polypeptide chains across the membrane. This chain is Protein translocase subunit SecA, found in Bacillus licheniformis (strain ATCC 14580 / DSM 13 / JCM 2505 / CCUG 7422 / NBRC 12200 / NCIMB 9375 / NCTC 10341 / NRRL NRS-1264 / Gibson 46).